The sequence spans 301 residues: Acetylglutamate kinase (301 aa).

Substrate contacts are provided by residues 68-69 (GG), arginine 90, and asparagine 195.

This sequence belongs to the acetylglutamate kinase family. ArgB subfamily.

The protein localises to the cytoplasm. It catalyses the reaction N-acetyl-L-glutamate + ATP = N-acetyl-L-glutamyl 5-phosphate + ADP. The protein operates within amino-acid biosynthesis; L-arginine biosynthesis; N(2)-acetyl-L-ornithine from L-glutamate: step 2/4. In terms of biological role, catalyzes the ATP-dependent phosphorylation of N-acetyl-L-glutamate. This chain is Acetylglutamate kinase, found in Pseudomonas entomophila (strain L48).